Here is a 37-residue protein sequence, read N- to C-terminus: Large ribosomal subunit protein bL36 (37 aa).

This sequence belongs to the bacterial ribosomal protein bL36 family.

The protein is Large ribosomal subunit protein bL36 of Histophilus somni (strain 129Pt) (Haemophilus somnus).